The following is a 997-amino-acid chain: Glutamate [NMDA] receptor subunit 1 (997 aa).

The N-terminal stretch at 1–26 is a signal peptide; it reads MAMAEFVFCRPLFGLAIVLLVAPIDA. The Extracellular segment spans residues 27–573; sequence AQRHTASDNP…TLVSFLQPFS (547 aa). 7 N-linked (GlcNAc...) asparagine glycosylation sites follow: N258, N314, N345, N397, N454, N481, and N501. Glycine-binding positions include 530 to 532 and R537; that span reads PLT. A helical transmembrane segment spans residues 574 to 594; that stretch reads NTLWILVMVSVHVVALVLYLL. The Cytoplasmic segment spans residues 595-651; sequence DRFSPFGRFKLSHSDSNEEKALNLSSAVWFAWGVLLNSGIGEGTPRSFSARVLGMVW. The chain crosses the membrane as a helical span at residues 652-672; it reads AGFAMIIVASYTANLAAFLVL. Topologically, residues 673–831 are extracellular; the sequence is ERPKTKLSGI…KTPNTLGLKN (159 aa). N693 carries N-linked (GlcNAc...) asparagine glycosylation. The glycine site is built by S703 and D747. A helical transmembrane segment spans residues 832 to 852; the sequence is MAGVFILVGVGIAGGVGLIII. Residues 853–997 lie on the Cytoplasmic side of the membrane; sequence EVIYKKHQVK…YTSDVSHLVV (145 aa). A disordered region spans residues 970–997; sequence LGKTRPQQSVLPPRYSPGYTSDVSHLVV. Residues 987 to 997 show a composition bias toward polar residues; sequence GYTSDVSHLVV.

It belongs to the glutamate-gated ion channel (TC 1.A.10.1) family. As to quaternary structure, forms a heteromeric NMDA channel with Nmdar2. In terms of tissue distribution, highly expressed in adult heads: in the brain and ring gland. Low expression throughout the entire brain is also seen. Higher expression levels were observed in some scattered cell bodies and part of their fibers, including those from several pairs of DPM (dorsal-posterior-medial) neurons surrounding the calyx, DAL (dorsal-anterior-lateral) and DPL (dorsal-posterior-lateral) neurons in the lateral protocerebrum (LP), VAL (ventral-anterior-lateral) neurons in the anterior protocerebrum, and two pairs of VP (ventral-posterior) neurons in the posterior protocerebrum. Many cell bodies in the optic lobes show preferential expression. Punctuate expression is notably detected in many brain regions including the superior medial protocerebrum. Weakly expressed in the antennal lobes and central complex.

It is found in the cell membrane. The protein localises to the postsynaptic cell membrane. It localises to the postsynaptic density. NMDA receptor subtype of glutamate-gated ion channels with high calcium permeability and voltage-dependent sensitivity to magnesium. Mediated by glycine. This protein plays a key role in synaptic plasticity, synaptogenesis, excitotoxicity, memory acquisition and learning. It mediates neuronal functions in glutamate neurotransmission. Is involved in the cell surface targeting of NMDA receptors. Plays a role in associative learning and in long-term memory consolidation. The protein is Glutamate [NMDA] receptor subunit 1 of Drosophila melanogaster (Fruit fly).